The chain runs to 427 residues: Putative FBD-associated F-box protein At3g50710 (427 aa).

The region spanning 1–53 (MDRISNLSDDLLLKIVSSLPTKDVVVTMLLSKRWKFLWMMVPKLRFDDEFELE) is the F-box domain. The region spanning 345 to 395 (HWEEPSSVPQCLLFHLNIFEWKYYNAGDEEKKVVAYILKNARQLKTATFSA) is the FBD domain.

This Arabidopsis thaliana (Mouse-ear cress) protein is Putative FBD-associated F-box protein At3g50710.